A 310-amino-acid chain; its full sequence is Putative S-adenosyl-L-methionine-dependent methyltransferase MAP_2076c (310 aa).

S-adenosyl-L-methionine is bound by residues aspartate 131 and 160–161 (DL).

This sequence belongs to the UPF0677 family.

Functionally, exhibits S-adenosyl-L-methionine-dependent methyltransferase activity. This Mycolicibacterium paratuberculosis (strain ATCC BAA-968 / K-10) (Mycobacterium paratuberculosis) protein is Putative S-adenosyl-L-methionine-dependent methyltransferase MAP_2076c.